Consider the following 139-residue polypeptide: UPF0225 protein Bpro_4182 (139 aa).

The protein belongs to the UPF0225 family.

The protein is UPF0225 protein Bpro_4182 of Polaromonas sp. (strain JS666 / ATCC BAA-500).